Reading from the N-terminus, the 520-residue chain is Amphoterin-induced protein 2 (520 aa).

The N-terminal stretch at 1–37 (MSLRFHTLPTLPRAVKPGCRELLCLLVIAVMVSPSSS) is a signal peptide. The 30-residue stretch at 38-67 (GLCPTACICATDIVSCTNKNLSKVPGNLFR) folds into the LRRNT domain. Residues 38–398 (GLCPTACICA…SHHAHEAFNT (361 aa)) are Extracellular-facing. Disulfide bonds link Cys40–Cys46 and Cys44–Cys53. N-linked (GlcNAc...) asparagine glycosylation occurs at Asn57. LRR repeat units follow at residues 68-89 (LIKR…WIPV), 93-114 (KLST…SFST), 117-138 (NLKC…MFQE), 141-162 (VLEV…AFGG), 165-186 (HLQK…LYVG), and 192-213 (DLTF…HINL). Asn103 carries an N-linked (GlcNAc...) asparagine glycan. The LRRCT domain occupies 227 to 283 (NPFVCDCSLYSLLTFWYRRHFNSVTDFKHDYTCRLWLDSRHSHQLLLLQDSFLNCSH). 2 cysteine pairs are disulfide-bonded: Cys231–Cys259 and Cys233–Cys281. Residues Asn280, Asn287, Asn344, Asn372, Asn380, Asn383, and Asn387 are each glycosylated (N-linked (GlcNAc...) asparagine). The 91-residue stretch at 288–378 (GSFHALGFIH…RLLNETVDIM (91 aa)) folds into the Ig-like C2-type domain. Cys309 and Cys362 are oxidised to a cystine. A helical transmembrane segment spans residues 399–419 (AFTTLAACVVSIVLVLLYLYL). The Cytoplasmic segment spans residues 420 to 520 (TPCPCKCRDK…FSDTPFVAST (101 aa)). Disordered regions lie at residues 437 to 458 (QSNA…AEDR) and 498 to 520 (SRAK…VAST).

This sequence belongs to the immunoglobulin superfamily. AMIGO family. In terms of assembly, binds itself as well as AMIGO1 and AMIGO3. In terms of tissue distribution, highest levels in the lung. High levels in cerebellar granule neurons and Purkinje cells. Also in pyramidal cells between CA1 and CA3 regions of the hippocampus and granule cells of the dentate gyrus.

It is found in the cell membrane. The protein resides in the nucleus. Required for depolarization-dependent survival of cultured cerebellar granule neurons. May mediate homophilic as well as heterophilic cell-cell interaction with AMIGO1 or AMIGO3. May contribute to signal transduction through its intracellular domain. This is Amphoterin-induced protein 2 from Rattus norvegicus (Rat).